Here is a 441-residue protein sequence, read N- to C-terminus: Glutamate--tRNA ligase 1 (441 aa).

Positions 8–18 (PSPTGYIHIGN) match the 'HIGH' region motif. A 'KMSKS' region motif is present at residues 239–243 (ALSKR). Lys242 lines the ATP pocket.

Belongs to the class-I aminoacyl-tRNA synthetase family. Glutamate--tRNA ligase type 1 subfamily. As to quaternary structure, monomer.

The protein localises to the cytoplasm. It catalyses the reaction tRNA(Glu) + L-glutamate + ATP = L-glutamyl-tRNA(Glu) + AMP + diphosphate. Catalyzes the attachment of glutamate to tRNA(Glu) in a two-step reaction: glutamate is first activated by ATP to form Glu-AMP and then transferred to the acceptor end of tRNA(Glu). The polypeptide is Glutamate--tRNA ligase 1 (Roseobacter denitrificans (strain ATCC 33942 / OCh 114) (Erythrobacter sp. (strain OCh 114))).